A 249-amino-acid polypeptide reads, in one-letter code: Mitochondrial intermembrane space import and assembly protein 40 (249 aa).

Residues 1-22 (MYRLATRRVLAQTTQTFSKRTF) constitute a mitochondrion transit peptide. Residues 23–36 (SNQGFRAAKASKTN) lie on the Mitochondrial matrix side of the membrane. The chain crosses the membrane as a helical; Signal-anchor for type II membrane protein span at residues 37–55 (MYLGAGIALIPVIMSINYL). At 56 to 249 (NGNHIANEVD…KAKAEDSNTK (194 aa)) the chain is on the mitochondrial intermembrane side. Positions 95-127 (KADVKTKVPAEEANPETRTETDKPSEESQKDEE) are enriched in basic and acidic residues. A disordered region spans residues 95–136 (KADVKTKVPAEEANPETRTETDKPSEESQKDEENSYEGAAYN). Intrachain disulfides connect C146–C148, C157–C190, and C167–C180. One can recognise a CHCH domain in the interval 154-198 (HGPCGEEFKEAFACFIYSESEPKGIECIKKFESMRNCFREHPEHY). 2 consecutive short sequence motifs (cx9C motif) follow at residues 157 to 167 (CGEEFKEAFAC) and 180 to 190 (CIKKFESMRNC). The tract at residues 202–249 (LYDDEEQEPLVDVNEKKGDASEQSAETIADDATKVVKEKAKAEDSNTK) is disordered. The segment covering 232 to 249 (DATKVVKEKAKAEDSNTK) has biased composition (basic and acidic residues).

As to quaternary structure, monomer. It depends on Cu(2+) as a cofactor. Zn(2+) is required as a cofactor.

It is found in the mitochondrion inner membrane. Functionally, required for the import and folding of small cysteine-containing proteins (small Tim) in the mitochondrial intermembrane space (IMS). Forms a redox cycle with ERV1 that involves a disulfide relay system. Precursor proteins to be imported into the IMS are translocated in their reduced form into the mitochondria. The oxidized form of MIA40 forms a transient intermolecular disulfide bridge with the reduced precursor protein, resulting in oxidation of the precursor protein that now contains an intramolecular disulfide bond and is able to undergo folding in the IMS. This chain is Mitochondrial intermembrane space import and assembly protein 40 (MIA40), found in Debaryomyces hansenii (strain ATCC 36239 / CBS 767 / BCRC 21394 / JCM 1990 / NBRC 0083 / IGC 2968) (Yeast).